Here is a 468-residue protein sequence, read N- to C-terminus: 5-carboxymethyl-2-hydroxymuconate semialdehyde dehydrogenase (468 aa).

Glu-244 is an active-site residue. Cys-278 serves as the catalytic Nucleophile.

It belongs to the aldehyde dehydrogenase family. As to quaternary structure, homodimer.

The enzyme catalyses 2-hydroxy-5-carboxymethylmuconate semialdehyde + NAD(+) + H2O = (2E,4Z)-5-hydroxypenta-2,4-diene-1,2,5-tricarboxylate + NADH + 2 H(+). Its pathway is aromatic compound metabolism; 4-hydroxyphenylacetate degradation; pyruvate and succinate semialdehyde from 4-hydroxyphenylacetate: step 3/7. Its function is as follows. Catalyzes the conversion of 5-carboxymethyl-2-hydroxy-muconic semialdehyde (CHMS) into 5-carboxymethyl-2-hydroxy-muconic acid (CHM or (2E,4Z)-5-hydroxypenta-2,4-diene-1,2,5-tricarboxylate). Is involved in a meta-cleavage pathway for the catabolism of 4-hydroxyphenylacetate (4-HPA) via homoprotocatechuate (HPC or 3,4-dihydroxyphenylacetate). The chain is 5-carboxymethyl-2-hydroxymuconate semialdehyde dehydrogenase from Escherichia coli.